We begin with the raw amino-acid sequence, 243 residues long: ATP synthase subunit a (243 aa).

The next 7 helical transmembrane spans lie at 29 to 49 (NASL…YIGL), 54 to 74 (ILPN…VSTI), 89 to 109 (VFTI…PLGF), 114 to 134 (HIAV…AIGF), 144 to 164 (ILLP…IELF), 182 to 202 (IAGH…NIFL), and 208 to 228 (AFII…AYIF).

Belongs to the ATPase A chain family. As to quaternary structure, F-type ATPases have 2 components, CF(1) - the catalytic core - and CF(0) - the membrane proton channel. CF(1) has five subunits: alpha(3), beta(3), gamma(1), delta(1), epsilon(1). CF(0) has three main subunits: a(1), b(2) and c(9-12). The alpha and beta chains form an alternating ring which encloses part of the gamma chain. CF(1) is attached to CF(0) by a central stalk formed by the gamma and epsilon chains, while a peripheral stalk is formed by the delta and b chains.

It is found in the cell inner membrane. Key component of the proton channel; it plays a direct role in the translocation of protons across the membrane. This Ehrlichia chaffeensis (strain ATCC CRL-10679 / Arkansas) protein is ATP synthase subunit a.